The following is a 275-amino-acid chain: 2,3,4,5-tetrahydropyridine-2,6-dicarboxylate N-succinyltransferase (275 aa).

Substrate-binding residues include Arg-104 and Asp-141.

The protein belongs to the transferase hexapeptide repeat family. Homotrimer.

It is found in the cytoplasm. The catalysed reaction is (S)-2,3,4,5-tetrahydrodipicolinate + succinyl-CoA + H2O = (S)-2-succinylamino-6-oxoheptanedioate + CoA. The protein operates within amino-acid biosynthesis; L-lysine biosynthesis via DAP pathway; LL-2,6-diaminopimelate from (S)-tetrahydrodipicolinate (succinylase route): step 1/3. In Mannheimia succiniciproducens (strain KCTC 0769BP / MBEL55E), this protein is 2,3,4,5-tetrahydropyridine-2,6-dicarboxylate N-succinyltransferase.